A 525-amino-acid polypeptide reads, in one-letter code: NAD(P)H-quinone oxidoreductase chain 4 1 (525 aa).

14 helical membrane passes run 6 to 26 (FPWLTTIILLPIAASLLIPII), 36 to 56 (WYALIVGLIDFALIVYAFYTS), 91 to 111 (LIILTGFITTLATLAAWPVTL), 115 to 135 (LFYFLLLAMYGGQIAVFAVQD), 136 to 156 (LLLFFLVWELELIPVYLLLAI), 169 to 189 (FILYTAGGSLFILLAALTMAF), 212 to 232 (LLLYAGFLIAYAIKLPIIPLH), 243 to 263 (TAPAHMLLAGILLKMGGYALI), 277 to 297 (FAPVLVVLGVVNIIYAALTSF), 314 to 334 (MGFVIIGFASFTDLGLSGAVL), 335 to 355 (QMVSHGLIGASLFFLVGATYD), 375 to 397 (IFAMFTACSMASLALPGMSGFVA), 417 to 437 (VIVVFLMAVGVILTPIYLLSM), and 464 to 484 (VFVIACLLVPIIGIGFYPKLL).

The protein belongs to the complex I subunit 4 family.

The protein localises to the cellular thylakoid membrane. The enzyme catalyses a plastoquinone + NADH + (n+1) H(+)(in) = a plastoquinol + NAD(+) + n H(+)(out). It carries out the reaction a plastoquinone + NADPH + (n+1) H(+)(in) = a plastoquinol + NADP(+) + n H(+)(out). Its function is as follows. NDH-1 shuttles electrons from NAD(P)H, via FMN and iron-sulfur (Fe-S) centers, to quinones in the respiratory chain. The immediate electron acceptor for the enzyme in this species is believed to be plastoquinone. Couples the redox reaction to proton translocation (for every two electrons transferred, four hydrogen ions are translocated across the cytoplasmic membrane), and thus conserves the redox energy in a proton gradient. The polypeptide is NAD(P)H-quinone oxidoreductase chain 4 1 (Trichormus variabilis (strain ATCC 29413 / PCC 7937) (Anabaena variabilis)).